A 719-amino-acid chain; its full sequence is Translation factor guf1, mitochondrial (719 aa).

A mitochondrion-targeting transit peptide spans 1-75 (MRGALCRPDV…TRCFSALRSL (75 aa)). Residues 119–301 (ERYRNFCIVA…AVISNVPAPV (183 aa)) form the tr-type G domain. Residues 128 to 135 (AHIDHGKS), 194 to 198 (DTPGH), and 248 to 251 (NKID) contribute to the GTP site.

The protein belongs to the TRAFAC class translation factor GTPase superfamily. Classic translation factor GTPase family. LepA subfamily.

It localises to the mitochondrion inner membrane. It carries out the reaction GTP + H2O = GDP + phosphate + H(+). Its function is as follows. Promotes mitochondrial protein synthesis. May act as a fidelity factor of the translation reaction, by catalyzing a one-codon backward translocation of tRNAs on improperly translocated ribosomes. Binds to mitochondrial ribosomes in a GTP-dependent manner. The sequence is that of Translation factor guf1, mitochondrial (guf1) from Neurospora crassa (strain ATCC 24698 / 74-OR23-1A / CBS 708.71 / DSM 1257 / FGSC 987).